Consider the following 1241-residue polypeptide: Anion exchange protein 2 (1241 aa).

Residues 1-240 are disordered; that stretch reads MSSAPRRPAK…RSYNLQERRR (240 aa). Over 1–707 the chain is Cytoplasmic; it reads MSSAPRRPAK…SDFRDALDPQ (707 aa). Composition is skewed to basic and acidic residues over residues 37–49 and 58–75; these read ELHR…RFEE and GGEE…EYHR. Composition is skewed to basic residues over residues 76–85 and 94–110; these read QSSHHIHHPL and RRRK…RRRP. Residues Ser-113, Ser-132, Ser-144, Ser-170, Ser-172, and Ser-173 each carry the phosphoserine modification. Residues 120–133 show a composition bias toward acidic residues; that stretch reads TIEEGEEDEDEASE. Over residues 141–155 the composition is skewed to low complexity; that stretch reads TQPSPVSTPSSVQFF. Residue Thr-183 is modified to Phosphothreonine. The segment covering 189 to 209 has biased composition (low complexity); that stretch reads GAQAGTQVEEAEAEAVAVASG. Gly residues predominate over residues 210–219; sequence TAGGDDGGAS. Residue Ser-243 is modified to Phosphoserine. Phosphothreonine is present on Thr-257. Lys-274 is subject to N6-methyllysine. The disordered stretch occupies residues 288-320; that stretch reads LVRKNAKGSTQSGREGREPGPTPRARPRAPHKP. Ser-443 is modified (phosphoserine). The tract at residues 449–471 is disordered; it reads SLLGHHHGQGAESDPHVTEPLMG. Helical transmembrane passes span 708-731, 737-774, 784-816, and 826-847; these read CLAA…GLLG, LIGV…LLVF, SNHL…SFLV, and IFAF…VKIF. The segment at 708–1241 is membrane (anion exchange); the sequence is CLAAVIFIYF…DEYNEMPMPV (534 aa). The Extracellular segment spans residues 848–900; the sequence is QEHPLHGCSASNSSEVDGGENMTWAGARPTLGPGNRSLAGQSGQGKPRGQPNT. N-linked (GlcNAc...) asparagine glycosylation is found at Asn-859, Asn-868, and Asn-882. Residues 901–918 form a helical membrane-spanning segment; sequence ALLSLVLMAGTFFIAFFL. Residues 919-933 are Cytoplasmic-facing; it reads RKFKNSRFFPGRIRR. 5 consecutive transmembrane segments (helical) span residues 934 to 954, 988 to 1010, 1036 to 1059, 1091 to 1136, and 1163 to 1199; these read VIGD…DYSI, PFPV…LIFM, LLLI…AATV, VTGL…IQFY, and MHLF…TVPL. A lipid anchor (S-palmitoyl cysteine) is attached at Cys-1173.

Belongs to the anion exchanger (TC 2.A.31) family. Expressed in the liver, stomach, kidney, prostate, thyroid and rectum. As to expression, expressed in the liver and kidney.

Its subcellular location is the apical cell membrane. It localises to the basolateral cell membrane. The catalysed reaction is hydrogencarbonate(in) + chloride(out) = hydrogencarbonate(out) + chloride(in). Sodium-independent anion exchanger which mediates the electroneutral exchange of chloride for bicarbonate ions across the cell membrane. Plays an important role in osteoclast differentiation and function. Regulates bone resorption and calpain-dependent actin cytoskeleton organization in osteoclasts via anion exchange-dependent control of pH. Essential for intracellular pH regulation in CD8(+) T-cells upon CD3 stimulation, modulating CD8(+) T-cell responses. This is Anion exchange protein 2 (SLC4A2) from Homo sapiens (Human).